Reading from the N-terminus, the 672-residue chain is MTPSQVAFEIRGTLLPGEVFAICGSCDALGNWNPQNAVALLPENDTGESMLWKATIVLSRGVSVQYRYFKGYFLEPKTIGGPCQVIVHKWETHLQPRSITPLESEIIIDDGQFGIHNGVETLDSGWLTCQTEIRLRLHYSEKPPVSITKKKLKKSRFRVKLTLEGLEEDDDDRVSPTVLHKMSNSLEISLISDNEFKCRHSQPECGYGLQPDRWTEYSIQTMEPDNLELIFDFFEEDLSEHVVQGDALPGHVGTACLLSSTIAESGKSAGILTLPIMSRNSRKTIGKVRVDYIIIKPLPGYSCDMKSSFSKYWKPRIPLDVGHRGAGNSTTTAQLAKVQENTIASLRNAASHGAAFVEFDVHLSKDFVPVVYHDLTCCLTMKKKFDADPVELFEIPVKELTFDQLQLLKLTHVTALKSKDRKESVVQEENSFSENQPFPSLKMVLESLPEDVGFNIEIKWICQQRDGMWDGNLSTYFDMNLFLDIILKTVLENSGKRRIVFSSFDADICTMVRQKQNKYPILFLTQGKSEIYPELMDLRSRTTPIAMSFAQFENLLGINVHTEDLLRNPSYIQEAKAKGLVIFCWGDDTNDPENRRKLKELGVNGLIYDRIYDWMPEQPNIFQVEQLERLKQELPELKSCLCPTVSRFVPSSLCGESDIHVDANGIDNVENA.

In terms of domain architecture, CBM20 spans M1–I115. Residues K70 and H88–K89 contribute to the substrate site. 2 positions are modified to phosphoserine: S175 and S424. In terms of domain architecture, GP-PDE spans P318–Q618. Y608 is subject to Phosphotyrosine.

The protein belongs to the glycerophosphoryl diester phosphodiesterase family. In terms of tissue distribution, widely expressed, with highest expression in spinal chord.

The protein localises to the cytoplasm. Its subcellular location is the cytosol. It carries out the reaction sn-glycerol 3-phosphocholine + H2O = sn-glycerol 3-phosphate + choline + H(+). May be involved in the negative regulation of skeletal muscle differentiation, independently of its glycerophosphocholine phosphodiesterase activity. The chain is Glycerophosphocholine phosphodiesterase GPCPD1 (GPCPD1) from Homo sapiens (Human).